The sequence spans 170 residues: 2S seed storage protein 2 (170 aa).

Residues 1-21 (MANKLFLVCATFALCFLLTNA) form the signal peptide. Propeptides lie at residues 22–37 (SIYR…DASN) and 73–88 (GPSL…DIEN).

Belongs to the 2S seed storage albumins family. As to quaternary structure, the mature protein consists of a small and a large chain linked by disulfide bonds.

In terms of biological role, this is a 2S seed storage protein. The polypeptide is 2S seed storage protein 2 (AT2S2) (Arabidopsis thaliana (Mouse-ear cress)).